A 394-amino-acid polypeptide reads, in one-letter code: Elongation factor Tu (394 aa).

The tr-type G domain maps to 10–204; the sequence is KPHLNVGTIG…TLDTYIEDPV (195 aa). Residues 19 to 26 form a G1 region; it reads GHVDHGKT. 19–26 is a binding site for GTP; that stretch reads GHVDHGKT. Thr26 serves as a coordination point for Mg(2+). Residues 60-64 are G2; the sequence is GITIK. Residues 81–84 form a G3 region; it reads DCPG. GTP is bound by residues 81–85 and 136–139; these read DCPGH and NKCD. Residues 136–139 form a G4 region; that stretch reads NKCD. Residues 174-176 are G5; sequence SAL.

The protein belongs to the TRAFAC class translation factor GTPase superfamily. Classic translation factor GTPase family. EF-Tu/EF-1A subfamily. As to quaternary structure, monomer.

Its subcellular location is the cytoplasm. The catalysed reaction is GTP + H2O = GDP + phosphate + H(+). Functionally, GTP hydrolase that promotes the GTP-dependent binding of aminoacyl-tRNA to the A-site of ribosomes during protein biosynthesis. This chain is Elongation factor Tu, found in Onion yellows phytoplasma (strain OY-M).